The following is a 295-amino-acid chain: Glutamate-binding protein GluB (295 aa).

Positions 1–26 (MSAKRTFTRIGAILGATALAGVTLTA) are cleaved as a signal peptide. The N-palmitoyl cysteine moiety is linked to residue C27. A lipid anchor (S-diacylglycerol cysteine) is attached at C27.

This sequence belongs to the bacterial solute-binding protein 3 family. As to quaternary structure, the complex is composed of two ATP-binding proteins (GluA), two transmembrane proteins (GluC and GluD) and a solute-binding protein (GluB).

The protein resides in the cell membrane. With respect to regulation, binding of glutamate or asparatate induces a higher thermal stability of the protein structure. Functionally, part of the ABC transporter complex GluABCD involved in glutamate uptake. Binds glutamate with a high affinity. Also binds aspartate with high affinity, suggesting that GluB could be involved in the transport of both amino acid residues into the cell. The sequence is that of Glutamate-binding protein GluB from Corynebacterium glutamicum (strain ATCC 13032 / DSM 20300 / JCM 1318 / BCRC 11384 / CCUG 27702 / LMG 3730 / NBRC 12168 / NCIMB 10025 / NRRL B-2784 / 534).